The primary structure comprises 292 residues: 33 kDa chaperonin (292 aa).

2 disulfides stabilise this stretch: C230/C232 and C263/C266.

It belongs to the HSP33 family. Under oxidizing conditions two disulfide bonds are formed involving the reactive cysteines. Under reducing conditions zinc is bound to the reactive cysteines and the protein is inactive.

It localises to the cytoplasm. In terms of biological role, redox regulated molecular chaperone. Protects both thermally unfolding and oxidatively damaged proteins from irreversible aggregation. Plays an important role in the bacterial defense system toward oxidative stress. This chain is 33 kDa chaperonin, found in Serratia proteamaculans (strain 568).